A 325-amino-acid chain; its full sequence is 7,8-didemethyl-8-hydroxy-5-deazariboflavin synthase (325 aa).

The Radical SAM core domain occupies 1–241 (MTYSKNVFVP…SDIAVQVAPN (241 aa)). Residues Cys-15, Cys-19, and Cys-22 each coordinate [4Fe-4S] cluster.

This sequence belongs to the radical SAM superfamily. CofG family. As to quaternary structure, consists of two subunits, CofG and CofH. [4Fe-4S] cluster serves as cofactor.

The enzyme catalyses 5-amino-5-(4-hydroxybenzyl)-6-(D-ribitylimino)-5,6-dihydrouracil + S-adenosyl-L-methionine = 7,8-didemethyl-8-hydroxy-5-deazariboflavin + 5'-deoxyadenosine + L-methionine + NH4(+) + H(+). It participates in cofactor biosynthesis; coenzyme F0 biosynthesis. Its function is as follows. Catalyzes the radical-mediated synthesis of 7,8-didemethyl-8-hydroxy-5-deazariboflavin from 5-amino-5-(4-hydroxybenzyl)-6-(D-ribitylimino)-5,6-dihydrouracil. The sequence is that of 7,8-didemethyl-8-hydroxy-5-deazariboflavin synthase from Methanosarcina barkeri (strain Fusaro / DSM 804).